The sequence spans 441 residues: Peroxisomal multifunctional enzyme A (441 aa).

Residues 1-302 are 3-hydroxyacyl-CoA dehydrogenase; sequence MALNFKDKVV…VNSKPADGES (302 aa). Residues 11-35, Ile-19, Asp-38, 73-74, and Asn-97 each bind NAD(+); these read IVTG…AKVV and SV. A substrate-binding site is contributed by Ser-149. Tyr-162 (proton acceptor) is an active-site residue. Residues 162 to 166 and 194 to 197 each bind NAD(+); these read YGSMK and AASR. The SCP2 domain occupies 331 to 440; that stretch reads ASKIFTTIQG…KLGALMQGSK (110 aa). A substrate-binding site is contributed by Gln-412.

Belongs to the short-chain dehydrogenases/reductases (SDR) family.

Its subcellular location is the peroxisome. It catalyses the reaction a (3S)-3-hydroxyacyl-CoA + NAD(+) = a 3-oxoacyl-CoA + NADH + H(+). It participates in lipid metabolism; fatty acid beta-oxidation. Enzyme acting on the peroxisomal beta-oxidation pathway for fatty acids. Protects the cells from the increase of the harmful xenobiotic fatty acids incorporated from their diets and optimizes cellular lipid composition for proper development. In Dictyostelium discoideum (Social amoeba), this protein is Peroxisomal multifunctional enzyme A (mfeA).